We begin with the raw amino-acid sequence, 285 residues long: Probable enoyl-CoA hydratase echA12 (285 aa).

This sequence belongs to the enoyl-CoA hydratase/isomerase family.

The enzyme catalyses a (3S)-3-hydroxyacyl-CoA = a (2E)-enoyl-CoA + H2O. It carries out the reaction a 4-saturated-(3S)-3-hydroxyacyl-CoA = a (3E)-enoyl-CoA + H2O. Functionally, could possibly oxidize fatty acids using specific components. The chain is Probable enoyl-CoA hydratase echA12 (echA12) from Mycobacterium bovis (strain ATCC BAA-935 / AF2122/97).